Here is a 96-residue protein sequence, read N- to C-terminus: C-C motif chemokine 20 (96 aa).

A signal peptide spans 1–26 (MCCTKSLLLAALMSVLLLHLCGESEA). Disulfide bonds link cysteine 32-cysteine 58 and cysteine 33-cysteine 74.

Belongs to the intercrine beta (chemokine CC) family. C-terminal processed forms which lack 1, 3 or 6 amino acids are produced by proteolytic cleavage after secretion from peripheral blood monocytes. Expressed in the seminal plasma, endometrial fluid and follicular fluid (at protein level). Expressed predominantly in the liver, lymph nodes, appendix, peripheral blood lymphocytes, and fetal lung. Low levels seen in thymus, prostate, testis, small intestine and colon.

It is found in the secreted. Its function is as follows. Acts as a ligand for C-C chemokine receptor CCR6. Signals through binding and activation of CCR6 and induces a strong chemotactic response and mobilization of intracellular calcium ions. The ligand-receptor pair CCL20-CCR6 is responsible for the chemotaxis of dendritic cells (DC), effector/memory T-cells and B-cells and plays an important role at skin and mucosal surfaces under homeostatic and inflammatory conditions, as well as in pathology, including cancer and various autoimmune diseases. CCL20 acts as a chemotactic factor that attracts lymphocytes and, slightly, neutrophils, but not monocytes. Involved in the recruitment of both the pro-inflammatory IL17 producing helper T-cells (Th17) and the regulatory T-cells (Treg) to sites of inflammation. Required for optimal migration of thymic natural regulatory T cells (nTregs) and DN1 early thymocyte progenitor cells. C-terminal processed forms have been shown to be equally chemotactically active for leukocytes. Positively regulates sperm motility and chemotaxis via its binding to CCR6 which triggers Ca2+ mobilization in the sperm which is important for its motility. Inhibits proliferation of myeloid progenitors in colony formation assays. May be involved in formation and function of the mucosal lymphoid tissues by attracting lymphocytes and dendritic cells towards epithelial cells. Possesses antibacterial activity towards E.coli ATCC 25922 and S.aureus ATCC 29213. This Homo sapiens (Human) protein is C-C motif chemokine 20 (CCL20).